We begin with the raw amino-acid sequence, 542 residues long: Chaperonin GroEL 2 (542 aa).

ATP contacts are provided by residues T30–P33, K51, D87–T91, G415, and D496.

The protein belongs to the chaperonin (HSP60) family. As to quaternary structure, forms a cylinder of 14 subunits composed of two heptameric rings stacked back-to-back. Interacts with the co-chaperonin GroES.

It localises to the cytoplasm. The catalysed reaction is ATP + H2O + a folded polypeptide = ADP + phosphate + an unfolded polypeptide.. Its function is as follows. Together with its co-chaperonin GroES, plays an essential role in assisting protein folding. The GroEL-GroES system forms a nano-cage that allows encapsulation of the non-native substrate proteins and provides a physical environment optimized to promote and accelerate protein folding. The sequence is that of Chaperonin GroEL 2 from Chelativorans sp. (strain BNC1).